The sequence spans 114 residues: Iron-sulfur cluster insertion protein ErpA (114 aa).

Iron-sulfur cluster-binding residues include cysteine 42, cysteine 106, and cysteine 108.

This sequence belongs to the HesB/IscA family. As to quaternary structure, homodimer. Requires iron-sulfur cluster as cofactor.

Functionally, required for insertion of 4Fe-4S clusters for at least IspG. In Klebsiella pneumoniae subsp. pneumoniae (strain ATCC 700721 / MGH 78578), this protein is Iron-sulfur cluster insertion protein ErpA.